We begin with the raw amino-acid sequence, 215 residues long: Probable phosphoglycerate mutase GpmB (215 aa).

Residues 8–15, 21–22, R58, R60, 82–85, 104–105, and 151–152 each bind substrate; these read RHGETQWN, QG, ELDM, RR, and GI. Residue H9 is the Tele-phosphohistidine intermediate of the active site. E82 acts as the Proton donor/acceptor in catalysis.

Belongs to the phosphoglycerate mutase family. GpmB subfamily.

It carries out the reaction (2R)-2-phosphoglycerate = (2R)-3-phosphoglycerate. It functions in the pathway carbohydrate degradation; glycolysis; pyruvate from D-glyceraldehyde 3-phosphate: step 3/5. This is Probable phosphoglycerate mutase GpmB from Citrobacter koseri (strain ATCC BAA-895 / CDC 4225-83 / SGSC4696).